The chain runs to 414 residues: Patatin-like protein 1 (414 aa).

The PNPLA domain maps to 20 to 224; sequence LAIDGGGIRG…AANNPTMVAM (205 aa). Residues 24-29 carry the GXGXXG motif; that stretch reads GGGIRG. The GXSXG signature appears at 62-66; that stretch reads GTSTG. The active-site Nucleophile is Ser64. Catalysis depends on Asp211, which acts as the Proton acceptor. Residues 211-213 carry the DGA/G motif; sequence DGG.

This sequence belongs to the patatin family.

Its function is as follows. Possesses non-specific lipolytic acyl hydrolase (LAH) activity. Hydrolyzes phospholipids as well as galactolipids. May play a role in disease resistance. In Oryza sativa subsp. indica (Rice), this protein is Patatin-like protein 1 (PLP1).